Consider the following 644-residue polypeptide: Threonine--tRNA ligase (644 aa).

In terms of domain architecture, TGS spans 3-64 (EMIRITFPDG…QEDGSISIIT (62 aa)). A catalytic region spans residues 245–542 (DHRKLGKELE…LIEEYKGAFP (298 aa)). The Zn(2+) site is built by cysteine 338, histidine 389, and histidine 519.

It belongs to the class-II aminoacyl-tRNA synthetase family. Homodimer. Zn(2+) is required as a cofactor.

The protein resides in the cytoplasm. It carries out the reaction tRNA(Thr) + L-threonine + ATP = L-threonyl-tRNA(Thr) + AMP + diphosphate + H(+). Catalyzes the attachment of threonine to tRNA(Thr) in a two-step reaction: L-threonine is first activated by ATP to form Thr-AMP and then transferred to the acceptor end of tRNA(Thr). Also edits incorrectly charged L-seryl-tRNA(Thr). The polypeptide is Threonine--tRNA ligase (Geobacillus sp. (strain WCH70)).